The chain runs to 189 residues: uncharacterized protein (189 aa).

Residues 9-69 (ADTGGRILRA…SMLTSHIAAV (61 aa)) form the HTH tetR-type domain. The H-T-H motif DNA-binding region spans 32-51 (TLAEIARRAGVSRPTVYRRW).

This is an uncharacterized protein from Mycobacterium bovis (strain ATCC BAA-935 / AF2122/97).